The sequence spans 101 residues: Small ribosomal subunit protein uS14 (101 aa).

The protein belongs to the universal ribosomal protein uS14 family. Part of the 30S ribosomal subunit. Contacts proteins S3 and S10.

In terms of biological role, binds 16S rRNA, required for the assembly of 30S particles and may also be responsible for determining the conformation of the 16S rRNA at the A site. This Sphingopyxis alaskensis (strain DSM 13593 / LMG 18877 / RB2256) (Sphingomonas alaskensis) protein is Small ribosomal subunit protein uS14.